Here is a 556-residue protein sequence, read N- to C-terminus: Set1/Ash2 histone methyltransferase complex subunit ASH2 (556 aa).

Over residues 1–19 the composition is skewed to polar residues; the sequence is MEDSQMDTSSPTESSSEVN. The segment at 1–27 is disordered; the sequence is MEDSQMDTSSPTESSSEVNFTAEEDKS. The segment at 34–90 adopts a PHD-type zinc-finger fold; the sequence is AGVCYCGKERNLNIVELLCATCSRWVHETCVSYQLGKGKLLPFITNYVFVCKNCSAS. Zn(2+)-binding residues include C37, C39, C52, C55, H60, C63, C84, and C87. Residues 216–251 are disordered; it reads ASLSKNNRQKRKFPGTDSGPTGKKGRPSSDITANVK. The 223-residue stretch at 288 to 510 folds into the B30.2/SPRY domain; it reads SSDWAGKPIP…VSVNFGPAFK (223 aa).

As to quaternary structure, core component of several methyltransferase-containing complexes. Component of the SET1C/COMPASS complex, composed at least of the catalytic subunit Set1, wds/WDR5, Wdr82, Rbbp5, ash2, Cfp1/CXXC1, hcf and Dpy-30L1. Component of the MLL3/4 (Histone-lysine N-methyltransferase/demethylase TRR) complex composed at least of the catalytic subunit trr, ash2, Rbbp5, Dpy-30L1, wds, hcf, ptip, Pa1, Utx, Lpt and Ncoa6. Interacts with hcf. Interacts with trr. Interacts (via B30.2/SPRY domain) with sktl; the interaction is direct. As to expression, in larvae and pupae, expressed in imaginal disks, salivary gland and fat body cells. No expression detected in central nervous system (at protein level).

It localises to the nucleus. The protein localises to the chromosome. Transcriptional regulator. Regulates a number of genes involved in wing development including activation of net and bs and repression of rho and kni and controls vein-intervein patterning during wing development. Required for correct expression of a number of homeotic genes including Scr in the first leg imaginal disk and Ubx in the third leg imaginal disk and haltere disks. Required for stabilization of the histone-lysine N-methyltransferase trr and for trimethylation of 'Lys-4' of histone H3. Together with sktl probably plays a role in maintenance of transcriptionally active chromatin through down-regulation of histone H1 hyperphosphorylation. This Drosophila melanogaster (Fruit fly) protein is Set1/Ash2 histone methyltransferase complex subunit ASH2.